The following is a 641-amino-acid chain: Threonine--tRNA ligase (641 aa).

A TGS domain is found at 1–61 (MPAITLPDGS…DDDVQLEIVT (61 aa)). A catalytic region spans residues 242–533 (DHRRIGRAQN…LIEHYAGALP (292 aa)). Zn(2+) is bound by residues Cys-333, His-384, and His-510.

It belongs to the class-II aminoacyl-tRNA synthetase family. In terms of assembly, homodimer. Requires Zn(2+) as cofactor.

It localises to the cytoplasm. The enzyme catalyses tRNA(Thr) + L-threonine + ATP = L-threonyl-tRNA(Thr) + AMP + diphosphate + H(+). Its function is as follows. Catalyzes the attachment of threonine to tRNA(Thr) in a two-step reaction: L-threonine is first activated by ATP to form Thr-AMP and then transferred to the acceptor end of tRNA(Thr). Also edits incorrectly charged L-seryl-tRNA(Thr). The sequence is that of Threonine--tRNA ligase from Alkalilimnicola ehrlichii (strain ATCC BAA-1101 / DSM 17681 / MLHE-1).